The sequence spans 369 residues: Putative gustatory receptor 39b (369 aa).

Over 1 to 32 (MLYSFHPYLKYFALLGLVPWSESCAQSKFVQK) the chain is Cytoplasmic. The chain crosses the membrane as a helical span at residues 33–53 (VYSAILIILNAVHFGISIYFP). The Extracellular segment spans residues 54–59 (QSAELF). A helical transmembrane segment spans residues 60-80 (LSLMVNVIVFVARIVCVTVII). Topologically, residues 81-122 (LQVMVHYDDYFRFCREMKYLGLRLQCELKIHVGRLKWQSYAK) are cytoplasmic. A helical membrane pass occupies residues 123–143 (ILALGIGFLVTVLPSIYVALS). Residues 144 to 147 (GSLL) are Extracellular-facing. Residues 148–168 (YFWSSLLSILIIRMQFVLVLL) traverse the membrane as a helical segment. Over 169–224 (NVELLGHHVSLLGIRLQNVLECHLMGANCTLDGNANRLCSLEFLLALKQSHMQLHY) the chain is Cytoplasmic. The helical transmembrane segment at 225 to 245 (LFTHFNDLFGWSILGTYVVLF) threads the bilayer. The Extracellular segment spans residues 246 to 265 (SDSTVNIYWTQQVLVEVYEY). A helical transmembrane segment spans residues 266-286 (KYLYATFSVFVPSFFNILVFC). Over 287–348 (RCGEFCQRQS…EGFMSTDNSL (62 aa)) the chain is Cytoplasmic. Residues 349–368 (LMSILAAKVTYLIVLMQFSS) traverse the membrane as a helical segment. Residue valine 369 is a topological domain, extracellular.

It belongs to the insect chemoreceptor superfamily. Gustatory receptor (GR) family. Gr2a subfamily. Expressed in the adult labellar chemosensory neurons and in abdominal ganglions. In larvae, is expressed in neurons of the dorsal and posterior pharyngeal sense organs.

The protein localises to the cell membrane. Its function is as follows. Probable gustatory receptor which mediates acceptance or avoidance behavior, depending on its substrates. Has also atypical sensory function in organ not limited to conventional taste sensing like abdominal ganglions. In Drosophila melanogaster (Fruit fly), this protein is Putative gustatory receptor 39b (Gr39b).